A 502-amino-acid chain; its full sequence is Mannitol 2-dehydrogenase (502 aa).

Position 37–48 (Ile-37–Ala-48) interacts with NAD(+).

The protein belongs to the mannitol dehydrogenase family. Monomer.

The enzyme catalyses D-mannitol + NAD(+) = D-fructose + NADH + H(+). Functionally, catalyzes the NAD(H)-dependent interconversion of D-fructose and D-mannitol in the mannitol metabolic pathway. In Aspergillus terreus (strain NIH 2624 / FGSC A1156), this protein is Mannitol 2-dehydrogenase.